Consider the following 356-residue polypeptide: Glycerol-3-phosphate dehydrogenase [NAD(P)+] (356 aa).

The NADPH site is built by Trp-12, Arg-32, Arg-33, and Lys-117. Sn-glycerol 3-phosphate contacts are provided by Lys-117, Gly-151, and Ser-153. An NADPH-binding site is contributed by Ala-155. The sn-glycerol 3-phosphate site is built by Lys-206, Asp-265, Arg-276, and Asn-277. Lys-206 functions as the Proton acceptor in the catalytic mechanism. Arg-276 is a binding site for NADPH. NADPH is bound by residues Leu-309 and Glu-311.

Belongs to the NAD-dependent glycerol-3-phosphate dehydrogenase family.

Its subcellular location is the cytoplasm. It catalyses the reaction sn-glycerol 3-phosphate + NAD(+) = dihydroxyacetone phosphate + NADH + H(+). The catalysed reaction is sn-glycerol 3-phosphate + NADP(+) = dihydroxyacetone phosphate + NADPH + H(+). The protein operates within membrane lipid metabolism; glycerophospholipid metabolism. In terms of biological role, catalyzes the reduction of the glycolytic intermediate dihydroxyacetone phosphate (DHAP) to sn-glycerol 3-phosphate (G3P), the key precursor for phospholipid synthesis. In Treponema pallidum (strain Nichols), this protein is Glycerol-3-phosphate dehydrogenase [NAD(P)+].